Consider the following 846-residue polypeptide: Envelope glycoprotein gp160 (846 aa).

An N-terminal signal peptide occupies residues 1–21 (MSGKIQLLVAFLLTSACLIYC). The Extracellular portion of the chain corresponds to 22-671 (TKYVTVFYGV…LTSWIKYIQY (650 aa)). Asparagine 36 is a glycosylation site (N-linked (GlcNAc...) asparagine; by host). Cysteine 43 and cysteine 56 form a disulfide bridge. N-linked (GlcNAc...) asparagine; by host glycans are attached at residues asparagine 69, asparagine 113, asparagine 132, asparagine 142, asparagine 157, asparagine 184, asparagine 197, asparagine 229, asparagine 232, asparagine 239, asparagine 263, asparagine 269, asparagine 280, asparagine 291, asparagine 301, asparagine 357, asparagine 363, asparagine 390, asparagine 400, asparagine 455, and asparagine 458. 5 cysteine pairs are disulfide-bonded: cysteine 100–cysteine 205, cysteine 107–cysteine 196, cysteine 112–cysteine 154, cysteine 218–cysteine 248, and cysteine 228–cysteine 240. The interval 112 to 153 (CNASTESAVATTSPSGPDMINDTDPCIQLNNCSGLREEDMVE) is V1. The tract at residues 154-196 (CQFNMTGLELDKKKQYSETWYSKDVVCESDNSTDRKRCYMNHC) is V2. The interval 296–329 (CRRPENKTVVPITLMSGRRFHSQKIINKKPRQAW) is V3. An intrachain disulfide couples cysteine 296 to cysteine 330. Intrachain disulfides connect cysteine 382-cysteine 438 and cysteine 389-cysteine 411. Residues 389 to 411 (CNMTWFLNWVENKTGQQHNYVPC) form a V4 region. Residues 454–461 (DNRTNITF) are V5. Positions 504-524 (GVLVLGFLGFLTTAGAAMGAA) are fusion peptide. The tract at residues 567–583 (LQARVTAIEKYLADQAR) is immunosuppression. Residues asparagine 603, asparagine 612, and asparagine 628 are each glycosylated (N-linked (GlcNAc...) asparagine; by host). Positions 616–643 (QEWEHKIRFLEANISESLEQAQIQQEKN) form a coiled coil. Residues 649–670 (KLNSWDVFGNWFDLTSWIKYIQ) are MPER; binding to GalCer. The helical transmembrane segment at 672 to 692 (GVMIVVGIVALRIVIYVVQML) threads the bilayer. At 693–846 (SRLRKGYRPV…IRQGAEIALL (154 aa)) the chain is on the cytoplasmic side. A YXXV motif; contains endocytosis signal motif is present at residues 699 to 702 (YRPV). Residue cysteine 765 is the site of S-palmitoyl cysteine; by host attachment. A Di-leucine internalization motif motif is present at residues 845 to 846 (LL).

In terms of assembly, the mature envelope protein (Env) consists of a homotrimer of non-covalently associated gp120-gp41 heterodimers. The resulting complex protrudes from the virus surface as a spike. There seems to be as few as 10 spikes on the average virion. Interacts with human CD4, CCR5 and CXCR4, to form a P4HB/PDI-CD4-CXCR4-gp120 complex. Gp120 also interacts with the C-type lectins CD209/DC-SIGN and CLEC4M/DC-SIGNR (collectively referred to as DC-SIGN(R)). Gp120 and gp41 interact with GalCer. As to quaternary structure, the mature envelope protein (Env) consists of a homotrimer of non-covalently associated gp120-gp41 heterodimers. The resulting complex protrudes from the virus surface as a spike. There seems to be as few as 10 spikes on the average virion. In terms of processing, specific enzymatic cleavages in vivo yield mature proteins. Envelope glycoproteins are synthesized as an inactive precursor that is heavily N-glycosylated and processed likely by host cell furin in the Golgi to yield the mature SU and TM proteins. The cleavage site between SU and TM requires the minimal sequence [KR]-X-[KR]-R. Post-translationally, palmitoylation of the transmembrane protein and of Env polyprotein (prior to its proteolytic cleavage) is essential for their association with host cell membrane lipid rafts. Palmitoylation is therefore required for envelope trafficking to classical lipid rafts, but not for viral replication.

The protein localises to the virion membrane. It localises to the host cell membrane. Its subcellular location is the host endosome membrane. In terms of biological role, the surface protein gp120 (SU) attaches the virus to the host lymphoid cell by binding to the primary receptor CD4. This interaction induces a structural rearrangement creating a high affinity binding site for a chemokine coreceptor like CXCR4 and/or CCR5. This peculiar 2 stage receptor-interaction strategy allows gp120 to maintain the highly conserved coreceptor-binding site in a cryptic conformation, protected from neutralizing antibodies. Since CD4 also displays a binding site for the disulfide-isomerase P4HB/PDI, a P4HB/PDI-CD4-CXCR4-gp120 complex may form. In that complex, P4HB/PDI could reach and reduce gp120 disulfide bonds, causing major conformational changes in gp120. TXN, another PDI family member could also be involved in disulfide rearrangements in Env during fusion. These changes are transmitted to the transmembrane protein gp41 and are thought to activate its fusogenic potential by unmasking its fusion peptide. Functionally, the surface protein gp120 is a ligand for CD209/DC-SIGN and CLEC4M/DC-SIGNR, which are respectively found on dendritic cells (DCs), and on endothelial cells of liver sinusoids and lymph node sinuses. These interactions allow capture of viral particles at mucosal surfaces by these cells and subsequent transmission to permissive cells. DCs are professional antigen presenting cells, critical for host immunity by inducing specific immune responses against a broad variety of pathogens. They act as sentinels in various tissues where they take up antigen, process it, and present it to T-cells following migration to lymphoid organs. HIV subverts the migration properties of dendritic cells to gain access to CD4+ T-cells in lymph nodes. Virus transmission to permissive T-cells occurs either in trans (without DCs infection, through viral capture and transmission), or in cis (following DCs productive infection, through the usual CD4-gp120 interaction), thereby inducing a robust infection. In trans infection, bound virions remain infectious over days and it is proposed that they are not degraded, but protected in non-lysosomal acidic organelles within the DCs close to the cell membrane thus contributing to the viral infectious potential during DCs' migration from the periphery to the lymphoid tissues. On arrival at lymphoid tissues, intact virions recycle back to DCs' cell surface allowing virus transmission to CD4+ T-cells. Virion capture also seems to lead to MHC-II-restricted viral antigen presentation, and probably to the activation of HIV-specific CD4+ cells. Its function is as follows. The transmembrane protein gp41 (TM) acts as a class I viral fusion protein. Under the current model, the protein has at least 3 conformational states: pre-fusion native state, pre-hairpin intermediate state, and post-fusion hairpin state. During fusion of viral and target intracellular membranes, the coiled coil regions (heptad repeats) assume a trimer-of-hairpins structure, positioning the fusion peptide in close proximity to the C-terminal region of the ectodomain. The formation of this structure appears to drive apposition and subsequent fusion of viral and target cell membranes. Complete fusion occurs in host cell endosomes and is dynamin-dependent, however some lipid transfer might occur at the plasma membrane. The virus undergoes clathrin-dependent internalization long before endosomal fusion, thus minimizing the surface exposure of conserved viral epitopes during fusion and reducing the efficacy of inhibitors targeting these epitopes. Membranes fusion leads to delivery of the nucleocapsid into the cytoplasm. The envelope glycoprotein gp160 precursor down-modulates cell surface CD4 antigen by interacting with it in the endoplasmic reticulum and blocking its transport to the cell surface. In terms of biological role, the gp120-gp41 heterodimer seems to contribute to T-cell depletion during HIV-1 infection. The envelope glycoproteins expressed on the surface of infected cells induce apoptosis through an interaction with uninfected cells expressing the receptor (CD4) and the coreceptors CXCR4 or CCR5. This type of bystander killing may be obtained by at least three distinct mechanisms. First, the interaction between the 2 cells can induce cellular fusion followed by nuclear fusion within the syncytium. Syncytia are condemned to die from apoptosis. Second, the 2 interacting cells may not fuse entirely and simply exchange plasma membrane lipids, after a sort of hemifusion process, followed by rapid death. Third, it is possible that virus-infected cells, on the point of undergoing apoptosis, fuse with CD4-expressing cells, in which case apoptosis is rapidly transmitted from one cell to the other and thus occurs in a sort of contagious fashion. Functionally, the gp120-gp41 heterodimer allows rapid transcytosis of the virus through CD4 negative cells such as simple epithelial monolayers of the intestinal, rectal and endocervical epithelial barriers. Both gp120 and gp41 specifically recognize glycosphingolipids galactosyl-ceramide (GalCer) or 3' sulfo-galactosyl-ceramide (GalS) present in the lipid rafts structures of epithelial cells. Binding to these alternative receptors allows the rapid transcytosis of the virus through the epithelial cells. This transcytotic vesicle-mediated transport of virions from the apical side to the basolateral side of the epithelial cells does not involve infection of the cells themselves. This Human immunodeficiency virus type 2 subtype A (isolate SBLISY) (HIV-2) protein is Envelope glycoprotein gp160 (env).